Reading from the N-terminus, the 159-residue chain is NADH-quinone oxidoreductase subunit B (159 aa).

Positions 36, 37, 102, and 132 each coordinate [4Fe-4S] cluster.

The protein belongs to the complex I 20 kDa subunit family. As to quaternary structure, NDH-1 is composed of 14 different subunits. Subunits NuoB, C, D, E, F, and G constitute the peripheral sector of the complex. The cofactor is [4Fe-4S] cluster.

The protein resides in the cell inner membrane. It carries out the reaction a quinone + NADH + 5 H(+)(in) = a quinol + NAD(+) + 4 H(+)(out). Its function is as follows. NDH-1 shuttles electrons from NADH, via FMN and iron-sulfur (Fe-S) centers, to quinones in the respiratory chain. Couples the redox reaction to proton translocation (for every two electrons transferred, four hydrogen ions are translocated across the cytoplasmic membrane), and thus conserves the redox energy in a proton gradient. In Albidiferax ferrireducens (strain ATCC BAA-621 / DSM 15236 / T118) (Rhodoferax ferrireducens), this protein is NADH-quinone oxidoreductase subunit B.